The chain runs to 75 residues: MSSIAQDLRKKDSLELEKIVIELKAKLLELRFAAANGEAEKLHTAKEIRKTIARALTILNERELAEKLNNKEANK.

This sequence belongs to the universal ribosomal protein uL29 family.

This is Large ribosomal subunit protein uL29 from Ureaplasma urealyticum serovar 10 (strain ATCC 33699 / Western).